Here is a 304-residue protein sequence, read N- to C-terminus: N-carbamoyl-D-amino acid hydrolase (304 aa).

One can recognise a CN hydrolase domain in the interval Met5–Leu276. Residues Glu47, Lys127, and Cys172 contribute to the active site.

It catalyses the reaction an N-carbamoyl-D-amino acid + H2O + 2 H(+) = a D-alpha-amino acid + NH4(+) + CO2. Functionally, the enzyme catalyzes the hydrolysis of N-carbamoyl-D-amino acids to the corresponding which are useful intermediates in the preparation of beta-lactam antibiotics. Industrial production of beta-lactam antibiotics is now being developed using this enzyme. This is N-carbamoyl-D-amino acid hydrolase from Agrobacterium sp. (strain KNK712).